The following is a 405-amino-acid chain: Magnesium-protoporphyrin IX monomethyl ester [oxidative] cyclase, chloroplastic (405 aa).

A chloroplast-targeting transit peptide spans 1 to 43 (MATEMALVKPISKFSTSSPIFSNSRYGKFTTVRMSSTSQSTTK).

Belongs to the AcsF family. Fe cation serves as cofactor.

Its subcellular location is the plastid. It is found in the chloroplast. It carries out the reaction Mg-protoporphyrin IX 13-monomethyl ester + 3 NADPH + 3 O2 + 2 H(+) = 3,8-divinyl protochlorophyllide a + 3 NADP(+) + 5 H2O. The protein operates within porphyrin-containing compound metabolism; chlorophyll biosynthesis. Functionally, catalyzes the formation of the isocyclic ring in chlorophyll biosynthesis. Mediates the cyclase reaction, which results in the formation of divinylprotochlorophyllide (Pchlide) characteristic of all chlorophylls from magnesium-protoporphyrin IX 13-monomethyl ester (MgPMME). The polypeptide is Magnesium-protoporphyrin IX monomethyl ester [oxidative] cyclase, chloroplastic (CRD1) (Gossypium hirsutum (Upland cotton)).